The sequence spans 673 residues: Probable serine/threonine-protein kinase SCO3848 (673 aa).

A Protein kinase domain is found at 11–277 (YELGPVLGRG…EMRVDIEACL (267 aa)). ATP contacts are provided by residues 17-25 (LGRGGMAEV) and lysine 40. Residue aspartate 138 is the Proton acceptor of the active site. The interval 302 to 345 (DQPTTALRSDGGGGATTMLPPMNPDDGGYGYDERPDRRRQQPRK) is disordered. PASTA domains follow at residues 379–445 (GNDK…VVST), 446–511 (GAPK…EVAK), 512–580 (AEEK…VVGK), and 581–649 (AVEK…MTVP). The disordered stretch occupies residues 472–500 (FEVETKQTESSQDEGTILSQNPDPGKELE). The segment covering 479-493 (TESSQDEGTILSQNP) has biased composition (polar residues). Disordered stretches follow at residues 613–641 (AQGS…PAAT) and 653–673 (GNGN…GFGD).

The protein belongs to the protein kinase superfamily. Ser/Thr protein kinase family.

The enzyme catalyses L-seryl-[protein] + ATP = O-phospho-L-seryl-[protein] + ADP + H(+). It carries out the reaction L-threonyl-[protein] + ATP = O-phospho-L-threonyl-[protein] + ADP + H(+). In Streptomyces coelicolor (strain ATCC BAA-471 / A3(2) / M145), this protein is Probable serine/threonine-protein kinase SCO3848.